The sequence spans 59 residues: Large ribosomal subunit protein bL32 (59 aa).

The protein belongs to the bacterial ribosomal protein bL32 family.

In Desulfitobacterium hafniense (strain Y51), this protein is Large ribosomal subunit protein bL32.